The primary structure comprises 368 residues: Phosphate acyltransferase (368 aa).

The disordered stretch occupies residues Glu334–Ala368.

The protein belongs to the PlsX family. Homodimer. Probably interacts with PlsY.

It is found in the cytoplasm. It catalyses the reaction a fatty acyl-[ACP] + phosphate = an acyl phosphate + holo-[ACP]. It participates in lipid metabolism; phospholipid metabolism. In terms of biological role, catalyzes the reversible formation of acyl-phosphate (acyl-PO(4)) from acyl-[acyl-carrier-protein] (acyl-ACP). This enzyme utilizes acyl-ACP as fatty acyl donor, but not acyl-CoA. This Paraburkholderia xenovorans (strain LB400) protein is Phosphate acyltransferase.